The sequence spans 93 residues: uncharacterized protein (93 aa).

This is an uncharacterized protein from Gallid herpesvirus 2 (strain Chicken/Md5/ATCC VR-987) (GaHV-2).